Consider the following 224-residue polypeptide: Ribosomal RNA large subunit methyltransferase E (224 aa).

Residues Gly-60, Trp-62, Asp-93, Asp-109, and Asp-137 each contribute to the S-adenosyl-L-methionine site. Lys-177 (proton acceptor) is an active-site residue.

The protein belongs to the class I-like SAM-binding methyltransferase superfamily. RNA methyltransferase RlmE family.

The protein resides in the cytoplasm. The catalysed reaction is uridine(2552) in 23S rRNA + S-adenosyl-L-methionine = 2'-O-methyluridine(2552) in 23S rRNA + S-adenosyl-L-homocysteine + H(+). Functionally, specifically methylates the uridine in position 2552 of 23S rRNA at the 2'-O position of the ribose in the fully assembled 50S ribosomal subunit. This Polynucleobacter asymbioticus (strain DSM 18221 / CIP 109841 / QLW-P1DMWA-1) (Polynucleobacter necessarius subsp. asymbioticus) protein is Ribosomal RNA large subunit methyltransferase E.